The following is a 48-amino-acid chain: Large ribosomal subunit protein bL34 (48 aa).

This sequence belongs to the bacterial ribosomal protein bL34 family.

In Gloeothece citriformis (strain PCC 7424) (Cyanothece sp. (strain PCC 7424)), this protein is Large ribosomal subunit protein bL34.